A 257-amino-acid polypeptide reads, in one-letter code: Ribonuclease PH (257 aa).

Phosphate contacts are provided by residues R86 and 124 to 126 (GTR).

This sequence belongs to the RNase PH family. Homohexameric ring arranged as a trimer of dimers.

The catalysed reaction is tRNA(n+1) + phosphate = tRNA(n) + a ribonucleoside 5'-diphosphate. Its function is as follows. Phosphorolytic 3'-5' exoribonuclease that plays an important role in tRNA 3'-end maturation. Removes nucleotide residues following the 3'-CCA terminus of tRNAs; can also add nucleotides to the ends of RNA molecules by using nucleoside diphosphates as substrates, but this may not be physiologically important. Probably plays a role in initiation of 16S rRNA degradation (leading to ribosome degradation) during starvation. This Sulfurihydrogenibium sp. (strain YO3AOP1) protein is Ribonuclease PH.